The following is a 337-amino-acid chain: tRNA N6-adenosine threonylcarbamoyltransferase (337 aa).

Residues His-111 and His-115 each coordinate Fe cation. Residues 134 to 138 (LVSGG), Asp-167, Gly-180, and Asn-272 each bind substrate. Asp-300 is a binding site for Fe cation.

The protein belongs to the KAE1 / TsaD family. Requires Fe(2+) as cofactor.

It localises to the cytoplasm. The catalysed reaction is L-threonylcarbamoyladenylate + adenosine(37) in tRNA = N(6)-L-threonylcarbamoyladenosine(37) in tRNA + AMP + H(+). Required for the formation of a threonylcarbamoyl group on adenosine at position 37 (t(6)A37) in tRNAs that read codons beginning with adenine. Is involved in the transfer of the threonylcarbamoyl moiety of threonylcarbamoyl-AMP (TC-AMP) to the N6 group of A37, together with TsaE and TsaB. TsaD likely plays a direct catalytic role in this reaction. The chain is tRNA N6-adenosine threonylcarbamoyltransferase from Yersinia enterocolitica serotype O:8 / biotype 1B (strain NCTC 13174 / 8081).